Reading from the N-terminus, the 456-residue chain is GTPase Der (456 aa).

2 EngA-type G domains span residues 2–167 (LKVA…DQFG) and 176–351 (ATFC…AQLK). Residues 8–15 (GKPNVGKS), 55–59 (DTGGL), 118–121 (NKIE), 182–189 (GKPNVGKS), 229–233 (DTAGI), and 294–297 (NKWD) each bind GTP. Residues 352–436 (IKISTSLLND…PITLYFKSKN (85 aa)) form the KH-like domain.

It belongs to the TRAFAC class TrmE-Era-EngA-EngB-Septin-like GTPase superfamily. EngA (Der) GTPase family. As to quaternary structure, associates with the 50S ribosomal subunit.

Its function is as follows. GTPase that plays an essential role in the late steps of ribosome biogenesis. The protein is GTPase Der of Mycoplasmoides gallisepticum (strain R(low / passage 15 / clone 2)) (Mycoplasma gallisepticum).